Consider the following 277-residue polypeptide: NADPH-dependent 7-cyano-7-deazaguanine reductase (277 aa).

86–88 (IES) is a binding site for substrate. 88-89 (SK) serves as a coordination point for NADPH. Cys-184 (thioimide intermediate) is an active-site residue. Asp-191 functions as the Proton donor in the catalytic mechanism. Residue 223–224 (HE) coordinates substrate. 252–253 (RG) contacts NADPH.

The protein belongs to the GTP cyclohydrolase I family. QueF type 2 subfamily. Homodimer.

Its subcellular location is the cytoplasm. It catalyses the reaction 7-aminomethyl-7-carbaguanine + 2 NADP(+) = 7-cyano-7-deazaguanine + 2 NADPH + 3 H(+). The protein operates within tRNA modification; tRNA-queuosine biosynthesis. Functionally, catalyzes the NADPH-dependent reduction of 7-cyano-7-deazaguanine (preQ0) to 7-aminomethyl-7-deazaguanine (preQ1). The protein is NADPH-dependent 7-cyano-7-deazaguanine reductase of Chromohalobacter salexigens (strain ATCC BAA-138 / DSM 3043 / CIP 106854 / NCIMB 13768 / 1H11).